The sequence spans 154 residues: DNA gyrase inhibitor (154 aa).

Belongs to the DNA gyrase inhibitor family. In terms of assembly, interacts with DNA gyrase.

It localises to the cytoplasm. In terms of biological role, inhibits the supercoiling activity of DNA gyrase. Acts by inhibiting DNA gyrase at an early step, prior to (or at the step of) binding of DNA by the gyrase. It protects cells against toxins that target DNA gyrase, by inhibiting activity of these toxins and reducing the formation of lethal double-strand breaks in the cell. The sequence is that of DNA gyrase inhibitor from Pectobacterium carotovorum subsp. carotovorum (strain PC1).